A 67-amino-acid chain; its full sequence is Bowman-Birk type proteinase inhibitor 1 (67 aa).

7 disulfide bridges follow: cysteine 5–cysteine 59, cysteine 6–cysteine 21, cysteine 9–cysteine 55, cysteine 11–cysteine 19, cysteine 29–cysteine 36, cysteine 33–cysteine 48, and cysteine 38–cysteine 46.

The protein belongs to the Bowman-Birk serine protease inhibitor family. In terms of assembly, monomer. Although dimerization may occur in solution. Seed.

In terms of biological role, inhibits trypsin but not chymotrypsin. The inhibitor consists of 2 domains and has 2 sites of interaction with trypsin. The sequence is that of Bowman-Birk type proteinase inhibitor 1 from Dioclea glabra.